We begin with the raw amino-acid sequence, 468 residues long: ATP synthase subunit beta (468 aa).

155-162 is an ATP binding site; that stretch reads GGAGVGKT.

Belongs to the ATPase alpha/beta chains family. As to quaternary structure, F-type ATPases have 2 components, CF(1) - the catalytic core - and CF(0) - the membrane proton channel. CF(1) has five subunits: alpha(3), beta(3), gamma(1), delta(1), epsilon(1). CF(0) has three main subunits: a(1), b(2) and c(9-12). The alpha and beta chains form an alternating ring which encloses part of the gamma chain. CF(1) is attached to CF(0) by a central stalk formed by the gamma and epsilon chains, while a peripheral stalk is formed by the delta and b chains.

It is found in the cell membrane. It catalyses the reaction ATP + H2O + 4 H(+)(in) = ADP + phosphate + 5 H(+)(out). In terms of biological role, produces ATP from ADP in the presence of a proton gradient across the membrane. The catalytic sites are hosted primarily by the beta subunits. This chain is ATP synthase subunit beta, found in Streptococcus pneumoniae (strain ATCC BAA-255 / R6).